The primary structure comprises 580 residues: Probable inositol transporter 3 (580 aa).

Helical transmembrane passes span 34 to 54 (GIGG…LLYI), 69 to 89 (EIIV…GGWY), 104 to 124 (VLFL…VIIL), 127 to 147 (LLVG…ISEM), 161 to 181 (GLLI…FVHT), 187 to 207 (WMLG…LTLP), 289 to 309 (FVGI…AGYA), 316 to 336 (ALAL…MMFV), 344 to 364 (LMII…AVFN), 455 to 475 (FGYL…PGMG), 493 to 513 (LAGG…SETF), and 524 to 544 (GTFL…WLLV).

This sequence belongs to the major facilitator superfamily. Sugar transporter (TC 2.A.1.1) family.

The protein resides in the membrane. In terms of biological role, plasma membrane inositol-proton symporter. The sequence is that of Probable inositol transporter 3 (INT3) from Arabidopsis thaliana (Mouse-ear cress).